Here is a 259-residue protein sequence, read N- to C-terminus: Putative deoxyribonuclease TATDN1 homolog (259 aa).

4 residues coordinate a divalent metal cation: E82, H116, H138, and D186.

Belongs to the metallo-dependent hydrolases superfamily. TatD-type hydrolase family. Requires a divalent metal cation as cofactor.

Its subcellular location is the nucleus. Its function is as follows. Putative deoxyribonuclease. The sequence is that of Putative deoxyribonuclease TATDN1 homolog from Vairimorpha ceranae (strain BRL01) (Microsporidian parasite).